The chain runs to 407 residues: DAZ-associated protein 1 (407 aa).

At Met-1 the chain carries N-acetylmethionine. RRM domains are found at residues 10 to 97 (GKLF…RTRP) and 113 to 190 (NKIF…RAEP). The disordered stretch occupies residues 74–117 (TLDGRNIDPKPCTPRGMQPERTRPKEGWQKGPRSDNSKSNKIFV). Over residues 91-111 (QPERTRPKEGWQKGPRSDNSK) the composition is skewed to basic and acidic residues. The residue at position 150 (Lys-150) is an N6-acetyllysine. Residues 185 to 194 (VKRAEPRDSK) show a composition bias toward basic and acidic residues. The segment at 185 to 407 (VKRAEPRDSK…NVQGFHPYRR (223 aa)) is disordered. The span at 195–207 (SQAPGQPGASQWG) shows a compositional bias: polar residues. The segment covering 247 to 262 (GPPPAGRGAPPPPPPF) has biased composition (pro residues). Position 253 is an omega-N-methylarginine (Arg-253). Residues 280–294 (FPQGYGAPPQFSFGY) are compositionally biased toward low complexity. Pro residues predominate over residues 295–315 (GPPPPPPDQFAPPGVPPPPAT). The segment covering 364–379 (SDPSQQPPSYGGPSVP) has biased composition (low complexity). Residues 380–393 (GSGGPPAGGSGFGR) are compositionally biased toward gly residues.

Interacts with DAZ and DAZL. In terms of processing, acetylation at Lys-150 is predominantly observed in the nuclear fraction, and may regulate nucleocytoplasmic transport. As to expression, mainly expressed in testis. Expressed to a lower level in thymus. Weakly or not expressed in heart, liver, brain, placenta, lung, skeletal muscle, kidney and pancreas.

The protein localises to the cytoplasm. The protein resides in the nucleus. In terms of biological role, RNA-binding protein, which may be required during spermatogenesis. The protein is DAZ-associated protein 1 (DAZAP1) of Homo sapiens (Human).